The following is a 366-amino-acid chain: Chalcone synthase B (366 aa).

The active site involves C172.

Belongs to the thiolase-like superfamily. Chalcone/stilbene synthases family.

It carries out the reaction (E)-4-coumaroyl-CoA + 3 malonyl-CoA + 3 H(+) = 2',4,4',6'-tetrahydroxychalcone + 3 CO2 + 4 CoA. It functions in the pathway secondary metabolite biosynthesis; flavonoid biosynthesis. In terms of biological role, the primary product of this enzyme is 4,2',4',6'-tetrahydroxychalcone (also termed naringenin-chalcone or chalcone) which can under specific conditions spontaneously isomerize into naringenin. This is Chalcone synthase B (CHSB) from Ipomoea trifida (Morning glory).